Reading from the N-terminus, the 310-residue chain is L-lactate dehydrogenase (310 aa).

NAD(+) is bound by residues V11, D32, and R37. Residues Q79, R85, and 117–120 contribute to the substrate site; that span reads NPVD. NAD(+) is bound by residues 115–117 and T140; that span reads VTN. 145 to 148 provides a ligand contact to substrate; the sequence is DTAR. Residues R150 and H165 each contribute to the beta-D-fructose 1,6-bisphosphate site. H172 serves as the catalytic Proton acceptor. Position 221 is a phosphotyrosine (Y221). T230 provides a ligand contact to substrate.

It belongs to the LDH/MDH superfamily. LDH family. Homotetramer.

The protein localises to the cytoplasm. It carries out the reaction (S)-lactate + NAD(+) = pyruvate + NADH + H(+). It participates in fermentation; pyruvate fermentation to lactate; (S)-lactate from pyruvate: step 1/1. Allosterically activated by fructose 1,6-bisphosphate (FBP). Functionally, catalyzes the conversion of lactate to pyruvate. The polypeptide is L-lactate dehydrogenase (Fervidobacterium nodosum (strain ATCC 35602 / DSM 5306 / Rt17-B1)).